We begin with the raw amino-acid sequence, 45 residues long: Gene 78 protein (45 aa).

Positions 1-14 (MKKMSDQLKARLEL) are enriched in basic and acidic residues. The disordered stretch occupies residues 1-45 (MKKMSDQLKARLELRLSNAAQPHRNRKREMKRPGKGNRNNWKKEY). The segment covering 23-35 (HRNRKREMKRPGK) has biased composition (basic residues).

The sequence is that of Gene 78 protein (78) from Mycobacterium phage L5 (Mycobacteriophage L5).